Reading from the N-terminus, the 180-residue chain is Large ribosomal subunit protein uL10 (180 aa).

Belongs to the universal ribosomal protein uL10 family. Part of the ribosomal stalk of the 50S ribosomal subunit. The N-terminus interacts with L11 and the large rRNA to form the base of the stalk. The C-terminus forms an elongated spine to which L12 dimers bind in a sequential fashion forming a multimeric L10(L12)X complex.

Forms part of the ribosomal stalk, playing a central role in the interaction of the ribosome with GTP-bound translation factors. This is Large ribosomal subunit protein uL10 (rplJ) from Treponema pallidum (strain Nichols).